The chain runs to 161 residues: 2-C-methyl-D-erythritol 2,4-cyclodiphosphate synthase (161 aa).

The a divalent metal cation site is built by D10 and H12. Residues 10 to 12 (DVH) and 36 to 37 (HS) contribute to the 4-CDP-2-C-methyl-D-erythritol 2-phosphate site. An a divalent metal cation-binding site is contributed by H44. 4-CDP-2-C-methyl-D-erythritol 2-phosphate is bound by residues 58–60 (DIG), 63–67 (FPDTD), 102–108 (AQVPKMA), 134–137 (TTTE), F141, and R144.

The protein belongs to the IspF family. Homotrimer. It depends on a divalent metal cation as a cofactor.

It carries out the reaction 4-CDP-2-C-methyl-D-erythritol 2-phosphate = 2-C-methyl-D-erythritol 2,4-cyclic diphosphate + CMP. It functions in the pathway isoprenoid biosynthesis; isopentenyl diphosphate biosynthesis via DXP pathway; isopentenyl diphosphate from 1-deoxy-D-xylulose 5-phosphate: step 4/6. Involved in the biosynthesis of isopentenyl diphosphate (IPP) and dimethylallyl diphosphate (DMAPP), two major building blocks of isoprenoid compounds. Catalyzes the conversion of 4-diphosphocytidyl-2-C-methyl-D-erythritol 2-phosphate (CDP-ME2P) to 2-C-methyl-D-erythritol 2,4-cyclodiphosphate (ME-CPP) with a corresponding release of cytidine 5-monophosphate (CMP). In Shewanella baltica (strain OS223), this protein is 2-C-methyl-D-erythritol 2,4-cyclodiphosphate synthase.